Consider the following 116-residue polypeptide: MSNIIKQLEQEQLKQNIPSFRPGDTLEVKVWVVEGAKKRLQAFEGVVIAIRNRGLHSAFTLRKVSNGTGVERVFQTHSPAIDSISVKRKGAVRKAKLYYLRERSGKSARIKERLGA.

The protein belongs to the bacterial ribosomal protein bL19 family.

This protein is located at the 30S-50S ribosomal subunit interface and may play a role in the structure and function of the aminoacyl-tRNA binding site. This is Large ribosomal subunit protein bL19 from Mannheimia succiniciproducens (strain KCTC 0769BP / MBEL55E).